Consider the following 581-residue polypeptide: Arginine--tRNA ligase (581 aa).

The 'HIGH' region motif lies at 126–136; it reads PNLAKEMHVGH.

Belongs to the class-I aminoacyl-tRNA synthetase family. As to quaternary structure, monomer.

Its subcellular location is the cytoplasm. The catalysed reaction is tRNA(Arg) + L-arginine + ATP = L-arginyl-tRNA(Arg) + AMP + diphosphate. The protein is Arginine--tRNA ligase of Shewanella sp. (strain MR-4).